The chain runs to 652 residues: Na(+)/H(+) antiporter NhaA 1 (652 aa).

The interval 1–427 (MTGELPRGRR…VGASLTTWLV (427 aa)) is na(+)/H(+) antiporter NhaA. A run of 11 helical transmembrane segments spans residues 27-47 (AFLH…VVAL), 78-98 (LRYW…GLEV), 114-134 (TLPL…YLAF), 142-162 (VGWG…LAVL), 173-193 (FLLT…AIAY), 200-220 (TALF…AAGG), 227-247 (LLLG…PVVV), 312-332 (LIVP…ELLA), 343-363 (VLFA…MLVA), 376-396 (WAAI…ALLI), and 411-431 (IGIL…FRLA). Residues 428–623 (FRLAARLPPA…LSAAVTSAFA (196 aa)) form the Thioredoxin domain. The segment at 626–652 (RLRPRDDREPDRRREVGSEQPDEEPGT) is disordered. Basic and acidic residues predominate over residues 628 to 642 (RPRDDREPDRRREVG).

This sequence in the N-terminal section; belongs to the NhaA Na(+)/H(+) (TC 2.A.33) antiporter family.

It localises to the cell membrane. It catalyses the reaction Na(+)(in) + 2 H(+)(out) = Na(+)(out) + 2 H(+)(in). Functionally, na(+)/H(+) antiporter that extrudes sodium in exchange for external protons. The polypeptide is Na(+)/H(+) antiporter NhaA 1 (Salinispora arenicola (strain CNS-205)).